Reading from the N-terminus, the 70-residue chain is Probable protein transport protein Sec61 subunit gamma (70 aa).

The Cytoplasmic portion of the chain corresponds to 1 to 33 (MADNADDLFQIPKNFYKEGSHFIKRCVKPDRKE). A helical membrane pass occupies residues 34–62 (FLSISKAVATGFVLMGLIGYIIKLIHIPI). At 63-70 (NKVLVGGA) the chain is on the extracellular side.

The protein belongs to the SecE/SEC61-gamma family. Heterotrimeric complex composed of SEC61-alpha, SEC61-beta and SEC61-gamma.

It localises to the endoplasmic reticulum membrane. In terms of biological role, necessary for protein translocation in the endoplasmic reticulum. This is Probable protein transport protein Sec61 subunit gamma (sss1) from Schizosaccharomyces pombe (strain 972 / ATCC 24843) (Fission yeast).